The chain runs to 267 residues: Hydroxyethylthiazole kinase (267 aa).

Met-51 contacts substrate. ATP is bound by residues Arg-127 and Ser-173. Substrate is bound at residue Ala-200.

It belongs to the Thz kinase family. Mg(2+) serves as cofactor.

It carries out the reaction 5-(2-hydroxyethyl)-4-methylthiazole + ATP = 4-methyl-5-(2-phosphooxyethyl)-thiazole + ADP + H(+). It participates in cofactor biosynthesis; thiamine diphosphate biosynthesis; 4-methyl-5-(2-phosphoethyl)-thiazole from 5-(2-hydroxyethyl)-4-methylthiazole: step 1/1. Its function is as follows. Catalyzes the phosphorylation of the hydroxyl group of 4-methyl-5-beta-hydroxyethylthiazole (THZ). This is Hydroxyethylthiazole kinase from Psychromonas ingrahamii (strain DSM 17664 / CCUG 51855 / 37).